The sequence spans 72 residues: Translation initiation factor IF-1 (72 aa).

Residues 1–72 (MAKEDTLEFP…TKGRINYRFK (72 aa)) enclose the S1-like domain.

The protein belongs to the IF-1 family. As to quaternary structure, component of the 30S ribosomal translation pre-initiation complex which assembles on the 30S ribosome in the order IF-2 and IF-3, IF-1 and N-formylmethionyl-tRNA(fMet); mRNA recruitment can occur at any time during PIC assembly.

The protein localises to the cytoplasm. Its function is as follows. One of the essential components for the initiation of protein synthesis. Stabilizes the binding of IF-2 and IF-3 on the 30S subunit to which N-formylmethionyl-tRNA(fMet) subsequently binds. Helps modulate mRNA selection, yielding the 30S pre-initiation complex (PIC). Upon addition of the 50S ribosomal subunit IF-1, IF-2 and IF-3 are released leaving the mature 70S translation initiation complex. The protein is Translation initiation factor IF-1 of Roseobacter denitrificans (strain ATCC 33942 / OCh 114) (Erythrobacter sp. (strain OCh 114)).